The chain runs to 514 residues: Beta-secretase 2 (514 aa).

The first 20 residues, 1–20 (MGALLRALLLPLLAQWLLRA), serve as a signal peptide directing secretion. Positions 21–62 (VPVLAPAPFTLPLQVAGAANHRASTVPGLGTPELPRADGLAL) are excised as a propeptide. Topologically, residues 21–469 (VPVLAPAPFT…NEPILWIVSY (449 aa)) are extracellular. Positions 88-425 (YYLEMLIGTP…DRAQRRVGFA (338 aa)) constitute a Peptidase A1 domain. Asp106 is an active-site residue. Residue Asn166 is glycosylated (N-linked (GlcNAc...) asparagine). 3 disulfide bridges follow: Cys229–Cys429, Cys288–Cys453, and Cys340–Cys389. Asp299 is a catalytic residue. Residue Asn362 is glycosylated (N-linked (GlcNAc...) asparagine). The helical transmembrane segment at 470–490 (ALMSVCGAILLVLILLLLFPL) threads the bilayer. The Cytoplasmic portion of the chain corresponds to 491–514 (HCRHAPRDPEVVNDESSLVRHRWK).

It belongs to the peptidase A1 family. In terms of assembly, monomer. Interacts with RTN3 and RTN4. Post-translationally, undergoes autoproteolytic cleavage. Glycosylated.

It localises to the cell membrane. Its subcellular location is the golgi apparatus. It is found in the endoplasmic reticulum. The protein resides in the endosome. The protein localises to the melanosome. The enzyme catalyses Broad endopeptidase specificity. Cleaves Glu-Val-Asn-Leu-|-Asp-Ala-Glu-Phe in the Swedish variant of Alzheimer's amyloid precursor protein.. In terms of biological role, responsible for the proteolytic processing of the amyloid precursor protein (APP). Cleaves APP, between residues 690 and 691, leading to the generation and extracellular release of beta-cleaved soluble APP, and a corresponding cell-associated C-terminal fragment which is later released by gamma-secretase. It has also been shown that it can cleave APP between residues 671 and 672. Involved in the proteolytic shedding of PMEL at early stages of melanosome biogenesis. Cleaves PMEL within the M-beta fragment to release the amyloidogenic PMEL luminal fragment containing M-alpha and a small portion of M-beta N-terminus. This is a prerequisite step for subsequent processing and assembly of PMEL fibrils into amyloid sheets. Responsible also for the proteolytic processing of CLTRN in pancreatic beta cells. This Rattus norvegicus (Rat) protein is Beta-secretase 2 (Bace2).